Here is a 427-residue protein sequence, read N- to C-terminus: Endothelin-1 receptor (427 aa).

The first 20 residues, 1–20, serve as a signal peptide directing secretion; sequence METFCFRVSFWVALLGCVIS. Over 21–80 the chain is Extracellular; it reads DNPESHSTNLSTHVDDFTTFRGTEFSLVVTTHRPTNLALPSNGSMHNYCPQQTKITSAFK. Residues N29 and N62 are each glycosylated (N-linked (GlcNAc...) asparagine). A helical transmembrane segment spans residues 81-102; it reads YINTVISCTIFIVGMVGNATLL. Topologically, residues 103–112 are cytoplasmic; the sequence is RIIYQNKCMR. The chain crosses the membrane as a helical span at residues 113 to 132; sequence NGPNALIASLALGDLIYVVI. Residues 133–159 are Extracellular-facing; that stretch reads DLPINVFKLLAGRWPFENHDFGVFLCK. C158 and C239 are joined by a disulfide. A helical transmembrane segment spans residues 160–181; that stretch reads LFPFLQKSSVGITVLNLCALSV. Topologically, residues 182–205 are cytoplasmic; it reads DRYRAVASWSRVQGIGIPLVTAIE. The chain crosses the membrane as a helical span at residues 206–229; it reads IVSIWILSFILAIPEAIGFVMVPF. The Extracellular segment spans residues 230-256; sequence EYKGEEHKTCMLNATSKFMEFYQDVKD. The helical transmembrane segment at 257–278 threads the bilayer; it reads WWLFGFYFCMPLVCTAIFYTLM. The Cytoplasmic portion of the chain corresponds to 279 to 306; sequence TCEMLNRRNGSLRIALSEHLKQRREVAK. A helical transmembrane segment spans residues 307–328; the sequence is TVFCLVVIFALCWFPLHLSRIL. At 329–347 the chain is on the extracellular side; sequence KKTVYDEMDKNRCELLSFL. A helical membrane pass occupies residues 348-372; sequence LLMDYIGINLATMNSCINPIALYFV. Over 373-427 the chain is Cytoplasmic; sequence SKKFKNCFQSCLCCCCYQSKSLMTSVPMNGTSIQWKNHEQNNHNTERSSHKDSIN. S425 bears the Phosphoserine mark.

The protein belongs to the G-protein coupled receptor 1 family. Endothelin receptor subfamily. EDNRA sub-subfamily. In terms of assembly, interacts with HDAC7 and KAT5.

It localises to the cell membrane. Functionally, receptor for endothelin-1. Mediates its action by association with G proteins that activate a phosphatidylinositol-calcium second messenger system. The rank order of binding affinities for ET-A is: ET1 &gt; ET2 &gt;&gt; ET3. The chain is Endothelin-1 receptor from Sus scrofa (Pig).